Reading from the N-terminus, the 296-residue chain is Cutinase est1 (296 aa).

A signal peptide spans 1-35 (MSVTTPRREASLLSRAVAVAAAAAATVALAAPAQA). The interval 36–57 (ANPYERGPNPTESMLEARSGPF) is disordered. Tyrosine 95 is a poly(ethylene terephthalate) binding site. Serine 165 acts as the Nucleophile in catalysis. Poly(ethylene terephthalate) is bound by residues methionine 166 and tryptophan 190. Residues aspartate 211 and histidine 243 each act as charge relay system in the active site. Cysteines 276 and 294 form a disulfide.

The protein belongs to the AB hydrolase superfamily. In terms of assembly, monomer.

Its subcellular location is the secreted. The protein localises to the periplasm. It catalyses the reaction (ethylene terephthalate)(n) + H2O = (ethylene terephthalate)(n-1) + 4-[(2-hydroxyethoxy)carbonyl]benzoate + H(+). The catalysed reaction is a butanoate ester + H2O = an aliphatic alcohol + butanoate + H(+). The enzyme catalyses cutin + H2O = cutin monomers.. Its function is as follows. Catalyzes the hydrolysis of cutin, a polyester that forms the structure of plant cuticle. Shows esterase activity towards p-nitrophenol-linked aliphatic esters (pNP-aliphatic esters). Capable of degrading the plastic poly(ethylene terephthalate) (PET), the most abundant polyester plastic in the world. Can also depolymerize the synthetic polyester poly(epsilon-caprolactone) (PCL). This is Cutinase est1 from Thermobifida alba (Thermomonospora alba).